The sequence spans 386 residues: Succinate--CoA ligase [ADP-forming] subunit beta (386 aa).

In terms of domain architecture, ATP-grasp spans 9–244; it reads KQVLRSSNLN…DSQIDAKEAA (236 aa). Residues lysine 46, 53-55, glutamate 99, leucine 102, and glutamate 107 contribute to the ATP site; that span reads GRG. Mg(2+) contacts are provided by asparagine 199 and aspartate 213. Substrate-binding positions include asparagine 264 and 321–323; that span reads GIV.

The protein belongs to the succinate/malate CoA ligase beta subunit family. Heterotetramer of two alpha and two beta subunits. Mg(2+) serves as cofactor.

The catalysed reaction is succinate + ATP + CoA = succinyl-CoA + ADP + phosphate. It carries out the reaction GTP + succinate + CoA = succinyl-CoA + GDP + phosphate. The protein operates within carbohydrate metabolism; tricarboxylic acid cycle; succinate from succinyl-CoA (ligase route): step 1/1. Succinyl-CoA synthetase functions in the citric acid cycle (TCA), coupling the hydrolysis of succinyl-CoA to the synthesis of either ATP or GTP and thus represents the only step of substrate-level phosphorylation in the TCA. The beta subunit provides nucleotide specificity of the enzyme and binds the substrate succinate, while the binding sites for coenzyme A and phosphate are found in the alpha subunit. The polypeptide is Succinate--CoA ligase [ADP-forming] subunit beta (Thiobacillus denitrificans (strain ATCC 25259 / T1)).